A 51-amino-acid chain; its full sequence is Large ribosomal subunit protein eL39 (51 aa).

It belongs to the eukaryotic ribosomal protein eL39 family. Interacts with YIH1.

This Kluyveromyces marxianus (Yeast) protein is Large ribosomal subunit protein eL39 (RPL39).